The following is an 861-amino-acid chain: Homeobox-leucine zipper protein HOX29 (861 aa).

The homeobox DNA-binding region spans 2–65 (DASKYVRYTP…NRRCREKQRK (64 aa)). The stretch at 57–99 (RRCREKQRKESSRLQALNRKLTAMNKLLMEENDRLQKQVSQLV) forms a coiled coil. An START domain is found at 162-390 (RDASPAGLMS…VAHEDTRSVI (229 aa)).

It belongs to the HD-ZIP homeobox family. Class III subfamily. In terms of tissue distribution, expressed in roots, stems and leaf blades.

It is found in the nucleus. Functionally, probable transcription factor. In Oryza sativa subsp. indica (Rice), this protein is Homeobox-leucine zipper protein HOX29 (HOX29).